The chain runs to 338 residues: Holliday junction branch migration complex subunit RuvB (338 aa).

A large ATPase domain (RuvB-L) region spans residues 1–179 (MTDLTTPIRT…FGIPVRLNFY (179 aa)). ATP contacts are provided by Leu-18, Arg-19, Gly-60, Lys-63, Thr-64, Thr-65, Arg-169, Tyr-179, and Arg-216. Thr-64 contacts Mg(2+). The tract at residues 180–250 (THAELEQVIG…AADAALNRLE (71 aa)) is small ATPAse domain (RuvB-S). Residues 253-338 (ALGLDAMDRR…AGSQDGLFDK (86 aa)) are head domain (RuvB-H). The DNA site is built by Arg-289, Arg-308, and Arg-313.

It belongs to the RuvB family. In terms of assembly, homohexamer. Forms an RuvA(8)-RuvB(12)-Holliday junction (HJ) complex. HJ DNA is sandwiched between 2 RuvA tetramers; dsDNA enters through RuvA and exits via RuvB. An RuvB hexamer assembles on each DNA strand where it exits the tetramer. Each RuvB hexamer is contacted by two RuvA subunits (via domain III) on 2 adjacent RuvB subunits; this complex drives branch migration. In the full resolvosome a probable DNA-RuvA(4)-RuvB(12)-RuvC(2) complex forms which resolves the HJ.

The protein resides in the cytoplasm. The catalysed reaction is ATP + H2O = ADP + phosphate + H(+). Its function is as follows. The RuvA-RuvB-RuvC complex processes Holliday junction (HJ) DNA during genetic recombination and DNA repair, while the RuvA-RuvB complex plays an important role in the rescue of blocked DNA replication forks via replication fork reversal (RFR). RuvA specifically binds to HJ cruciform DNA, conferring on it an open structure. The RuvB hexamer acts as an ATP-dependent pump, pulling dsDNA into and through the RuvAB complex. RuvB forms 2 homohexamers on either side of HJ DNA bound by 1 or 2 RuvA tetramers; 4 subunits per hexamer contact DNA at a time. Coordinated motions by a converter formed by DNA-disengaged RuvB subunits stimulates ATP hydrolysis and nucleotide exchange. Immobilization of the converter enables RuvB to convert the ATP-contained energy into a lever motion, pulling 2 nucleotides of DNA out of the RuvA tetramer per ATP hydrolyzed, thus driving DNA branch migration. The RuvB motors rotate together with the DNA substrate, which together with the progressing nucleotide cycle form the mechanistic basis for DNA recombination by continuous HJ branch migration. Branch migration allows RuvC to scan DNA until it finds its consensus sequence, where it cleaves and resolves cruciform DNA. In Sphingopyxis alaskensis (strain DSM 13593 / LMG 18877 / RB2256) (Sphingomonas alaskensis), this protein is Holliday junction branch migration complex subunit RuvB.